The sequence spans 279 residues: Borealin (279 aa).

Basic residues predominate over residues 135 to 152 (KTKAKVAAKKPSTARKTR). A disordered region spans residues 135–180 (KTKAKVAAKKPSTARKTRASTANLTNTSKRTSKRGRATPSASKQIE). Over residues 153 to 163 (ASTANLTNTSK) the composition is skewed to polar residues.

This sequence belongs to the borealin family. In terms of assembly, component of the CPC at least composed of survivin/birc5, incenp, cdca8/borealin and/or cdca9/dasra-A, and aurkb/aurora-B. Interacts with incenp (via N-terminus).

It is found in the nucleus. It localises to the chromosome. The protein localises to the centromere. Its subcellular location is the cytoplasm. The protein resides in the cytoskeleton. It is found in the spindle. Functionally, component of the chromosomal passenger complex (CPC), a complex that acts as a key regulator of mitosis. The CPC complex has essential functions at the centromere in ensuring correct chromosome alignment and segregation and is required for chromatin-induced microtubule stabilization and spindle assembly. Contributes to CPC function by facilitating loading of the CPC onto chromosomes. This is Borealin (cdca8) from Xenopus tropicalis (Western clawed frog).